The primary structure comprises 408 residues: Argininosuccinate synthase (408 aa).

Residues 14 to 22 (AYSGGLDTS) and Ala41 each bind ATP. L-citrulline is bound by residues Tyr92 and Ser97. Gly122 contacts ATP. L-aspartate is bound by residues Thr124, Asn128, and Asp129. Asn128 lines the L-citrulline pocket. Residues Arg132, Ser181, Ser190, Glu266, and Tyr278 each coordinate L-citrulline.

Belongs to the argininosuccinate synthase family. Type 1 subfamily. Homotetramer.

The protein resides in the cytoplasm. It catalyses the reaction L-citrulline + L-aspartate + ATP = 2-(N(omega)-L-arginino)succinate + AMP + diphosphate + H(+). The protein operates within amino-acid biosynthesis; L-arginine biosynthesis; L-arginine from L-ornithine and carbamoyl phosphate: step 2/3. The polypeptide is Argininosuccinate synthase (Pelobacter propionicus (strain DSM 2379 / NBRC 103807 / OttBd1)).